The sequence spans 530 residues: AA9 family lytic polysaccharide monooxygenase C (530 aa).

Positions 1-18 are cleaved as a signal peptide; that stretch reads MQLKSTVHFLSLLAYTAA. Residues His19 and His103 each contribute to the Cu(2+) site. 2 disulfide bridges follow: Cys72–Cys190 and Cys114–Cys118. The N-linked (GlcNAc...) asparagine glycan is linked to Asn150. Gln185 contacts O2. Residue Tyr187 participates in Cu(2+) binding. Over residues 238–251 the composition is skewed to low complexity; that stretch reads YGSGSSSSQNSVES. 4 disordered regions span residues 238 to 279, 297 to 329, 348 to 375, and 492 to 512; these read YGSG…STSA, ESSS…SSSA, YSSA…KLSS, and GNGA…GTTP. Basic and acidic residues predominate over residues 312–324; it reads KSVEAKETTKVEE. Residues 348-368 show a composition bias toward low complexity; it reads YSSASPSSSPVLSSSKPASTS.

The protein belongs to the polysaccharide monooxygenase AA9 family. It depends on Cu(2+) as a cofactor.

It is found in the secreted. The enzyme catalyses [(1-&gt;4)-beta-D-glucosyl]n+m + reduced acceptor + O2 = 4-dehydro-beta-D-glucosyl-[(1-&gt;4)-beta-D-glucosyl]n-1 + [(1-&gt;4)-beta-D-glucosyl]m + acceptor + H2O.. Lytic polysaccharide monooxygenase (LPMO) that depolymerizes polysaccharides via the oxidation of scissile alpha- or beta-(1-4)-glycosidic bonds, yielding C1 or C4 oxidation products. Catalysis by LPMOs requires the reduction of the active-site copper from Cu(II) to Cu(I) by a reducing agent and H(2)O(2) or O(2) as a cosubstrate. Amorphous cellulose is not a suitable substrate for LPMO9C, which may act at the surface of cellulose microfibrils without any release of soluble products. This is AA9 family lytic polysaccharide monooxygenase C from Geotrichum candidum (Oospora lactis).